The chain runs to 327 residues: E3 ubiquitin ligase Rnf121 (327 aa).

Ala2 bears the N-acetylalanine mark. A run of 5 helical transmembrane segments spans residues Met50 to Val70, Ser79 to Leu99, His100 to Phe120, Ala148 to Phe168, and Pro172 to Leu192. The segment at Cys226–Lys276 adopts an RING-type; atypical zinc-finger fold. Residues Leu306 to Leu326 form a helical membrane-spanning segment.

This sequence belongs to the RNF121 family.

The protein resides in the endoplasmic reticulum membrane. The enzyme catalyses S-ubiquitinyl-[E2 ubiquitin-conjugating enzyme]-L-cysteine + [acceptor protein]-L-lysine = [E2 ubiquitin-conjugating enzyme]-L-cysteine + N(6)-ubiquitinyl-[acceptor protein]-L-lysine.. Its pathway is protein modification; protein ubiquitination. Functionally, E3 ubiquitin ligase which accepts ubiquitin and transfers it to substrates thereby promoting their degradation by the endoplasmic reticulum-associated degradation (ERAD) pathway which is a pathway involved in ubiquitin-dependent degradation of misfolded endoplasmic reticulum proteins. May regulate the unfolded protein response to reduce endoplasmic reticulum stress. The protein is E3 ubiquitin ligase Rnf121 (Rnf121) of Mus musculus (Mouse).